A 95-amino-acid polypeptide reads, in one-letter code: Aspartyl/glutamyl-tRNA(Asn/Gln) amidotransferase subunit C (95 aa).

It belongs to the GatC family. As to quaternary structure, heterotrimer of A, B and C subunits.

The catalysed reaction is L-glutamyl-tRNA(Gln) + L-glutamine + ATP + H2O = L-glutaminyl-tRNA(Gln) + L-glutamate + ADP + phosphate + H(+). The enzyme catalyses L-aspartyl-tRNA(Asn) + L-glutamine + ATP + H2O = L-asparaginyl-tRNA(Asn) + L-glutamate + ADP + phosphate + 2 H(+). Functionally, allows the formation of correctly charged Asn-tRNA(Asn) or Gln-tRNA(Gln) through the transamidation of misacylated Asp-tRNA(Asn) or Glu-tRNA(Gln) in organisms which lack either or both of asparaginyl-tRNA or glutaminyl-tRNA synthetases. The reaction takes place in the presence of glutamine and ATP through an activated phospho-Asp-tRNA(Asn) or phospho-Glu-tRNA(Gln). This chain is Aspartyl/glutamyl-tRNA(Asn/Gln) amidotransferase subunit C, found in Citrifermentans bemidjiense (strain ATCC BAA-1014 / DSM 16622 / JCM 12645 / Bem) (Geobacter bemidjiensis).